The following is a 255-amino-acid chain: uncharacterized protein (255 aa).

This is an uncharacterized protein from Paracoccus denitrificans.